The chain runs to 392 residues: G2/mitotic-specific cyclin-B2 (392 aa).

This sequence belongs to the cyclin family. Cyclin AB subfamily. Interacts with the CDK1 protein kinase to form a serine/threonine kinase holoenzyme complex also known as maturation promoting factor (MPF). The cyclin subunit imparts substrate specificity to the complex.

Essential for the control of the cell cycle at the G2/M (mitosis) transition. This Rana japonica (Japanese reddish frog) protein is G2/mitotic-specific cyclin-B2 (CCNB2).